Reading from the N-terminus, the 589-residue chain is Protein PAF1 homolog (589 aa).

Pro residues predominate over residues 1–54 (MASYRPPYPPLPQPPSQNSLAPPPPPPSLPPPVPPPPPSHQPYSYPPPPPPPPH). Disordered regions lie at residues 1-180 (MASY…PLLT) and 542-589 (GVYS…DYSE). The segment covering 55–65 (AYYQQGPHYPQ) has biased composition (low complexity). The span at 71–87 (APPPPPPPSAPPPLVPD) shows a compositional bias: pro residues. Over residues 88–116 (PPRHQGPNDHEKGASKQVGRRERAKPDPS) the composition is skewed to basic and acidic residues. Residues 117 to 127 (KHHHRSHLPHS) show a composition bias toward basic residues. Residues 126 to 159 (HSKKIETEEERRLRKKRELEKQRQDEKHRQQMKN) are a coiled coil. Over residues 128–154 (KKIETEEERRLRKKRELEKQRQDEKHR) the composition is skewed to basic and acidic residues.

This sequence belongs to the PAF1 family. In terms of assembly, component of the nuclear PAF1 complex (PAF1C), which consists of VIP2/ELF7/PAF1, VIP3/SKI8/WDR61, VIP4/LEO1, VIP5/RTF1, VIP6/ELF8/CTR9 and CDC73. As to expression, expressed in roots, leaves and shoot apex.

The protein localises to the nucleus. Functionally, component of the PAF1 complex (PAF1C) which is involved in histone modifications such as methylation on histone H3 'Lys-4' (H3K4me3). Involved in regulation of flowering time. Required for the expression of the flowering repressors and MAD-box genes FLC, AGL27/FLM and AGL31/MAF2. Required for histone H3 trimethylation on 'Lys-4' H3K4me3 at the FLC and AGL27/FLM loci. Involved in the control of seed dormancy and germination. In Arabidopsis thaliana (Mouse-ear cress), this protein is Protein PAF1 homolog.